The primary structure comprises 785 residues: Probable cationic amino acid transporter (785 aa).

15 consecutive transmembrane segments (helical) span residues 58-78, 83-103, 119-141, 187-207, 216-236, 251-271, 291-311, 337-357, 360-380, 384-404, 407-427, 568-588, 596-616, 628-648, and 655-675; these read LVSL…SGLV, AGPG…LSGV, AYTY…NLIL, YPDI…ALGV, VLNV…LFFV, WSGV…FDII, ASLV…TLMV, IVAI…LFPM, VIYA…VSTY, PAVA…LVSL, LIEM…VCVL, CVVL…FGSG, WAVL…FIII, MAPC…YLML, and WIRF…YGMW. A disordered region spans residues 715–785; it reads DQGPFQNWGK…VDDDLDDPLE (71 aa). The span at 727–740 shows a compositional bias: low complexity; that stretch reads QQKQPQQEQSEPQS. Residues 775 to 785 are compositionally biased toward acidic residues; it reads VVDDDLDDPLE.

This sequence belongs to the amino acid-polyamine-organocation (APC) superfamily.

Its subcellular location is the lysosome membrane. Its function is as follows. May be involved in arginine transport. This chain is Probable cationic amino acid transporter (slc7a14a), found in Danio rerio (Zebrafish).